Here is a 464-residue protein sequence, read N- to C-terminus: Serine--tRNA synthetase-like protein Slimp (464 aa).

The protein belongs to the class-II aminoacyl-tRNA synthetase family. Type-1 seryl-tRNA synthetase subfamily.

The protein resides in the mitochondrion. Essential protein which may play a role in mitochondrial morphogenesis and function. Has transfer RNA (tRNA)-binding activity and can bind tRNA(Ser) but does not have serine--tRNA ligase activity and does not bind ATP. The polypeptide is Serine--tRNA synthetase-like protein Slimp (Drosophila melanogaster (Fruit fly)).